A 31-amino-acid polypeptide reads, in one-letter code: Elongation factor Tu (31 aa).

It belongs to the GTP-binding elongation factor family. EF-Tu/EF-1A subfamily. Monomer.

The protein resides in the cytoplasm. This protein promotes the GTP-dependent binding of aminoacyl-tRNA to the A-site of ribosomes during protein biosynthesis. This chain is Elongation factor Tu (tuf), found in Streptomyces laurentii.